The primary structure comprises 260 residues: Ribonuclease HII (260 aa).

Residues 73-260 (LHIAGIDEAG…APVQQQLDIV (188 aa)) form the RNase H type-2 domain. 3 residues coordinate a divalent metal cation: D79, E80, and D171.

The protein belongs to the RNase HII family. The cofactor is Mn(2+). Mg(2+) serves as cofactor.

Its subcellular location is the cytoplasm. The catalysed reaction is Endonucleolytic cleavage to 5'-phosphomonoester.. In terms of biological role, endonuclease that specifically degrades the RNA of RNA-DNA hybrids. The chain is Ribonuclease HII from Desulfitobacterium hafniense (strain Y51).